Consider the following 355-residue polypeptide: Peptide chain release factor 1 (355 aa).

The residue at position 233 (Gln-233) is an N5-methylglutamine.

The protein belongs to the prokaryotic/mitochondrial release factor family. In terms of processing, methylated by PrmC. Methylation increases the termination efficiency of RF1.

It is found in the cytoplasm. In terms of biological role, peptide chain release factor 1 directs the termination of translation in response to the peptide chain termination codons UAG and UAA. The chain is Peptide chain release factor 1 from Bacillus mycoides (strain KBAB4) (Bacillus weihenstephanensis).